The primary structure comprises 102 residues: RNA-binding protein Hfq (102 aa).

In terms of domain architecture, Sm spans 9 to 68; sequence DPFLNALRRERVPVSIYLVNGIKLQGQIESFDQFVILLKNTVSQMVYKHAISTVVPSRPV. The tract at residues 63–102 is disordered; that stretch reads VPSRPVSHHSNNASGGTSSNYHHGSSAQNTSAQQDSEETE. Positions 70 to 96 are enriched in polar residues; it reads HHSNNASGGTSSNYHHGSSAQNTSAQQ.

Belongs to the Hfq family. As to quaternary structure, homohexamer.

Functionally, RNA chaperone that binds small regulatory RNA (sRNAs) and mRNAs to facilitate mRNA translational regulation in response to envelope stress, environmental stress and changes in metabolite concentrations. Also binds with high specificity to tRNAs. The polypeptide is RNA-binding protein Hfq (Shigella boydii serotype 18 (strain CDC 3083-94 / BS512)).